Consider the following 30-residue polypeptide: Protein ScvA (30 aa).

The disordered stretch occupies residues 1–30 (MERQNVQQQRGKDQRPQRPGASNPRRPNQR).

Might be involved in DNA-binding; the protein binds DNA in gel-shift assays and immunogold electron microscopy shows labelling of condensed chromatin. This chain is Protein ScvA (scvA), found in Coxiella burnetii (strain RSA 493 / Nine Mile phase I).